A 316-amino-acid chain; its full sequence is Apolipoprotein E (316 aa).

An N-terminal signal peptide occupies residues 1–18; that stretch reads MKVLWVAVVVALLAGCQA. Repeat copies occupy residues 79 to 100, 101 to 122, 123 to 144, 145 to 166, 167 to 188, 189 to 210, 211 to 232, and 233 to 254. Positions 79 to 254 are 8 X 22 AA approximate tandem repeats; that stretch reads ALMEETMKEV…RLDKIRQQLE (176 aa). Residue methionine 142 is modified to Methionine sulfoxide. Serine 146 is modified (phosphoserine; by FAM20C). Residues 157-167 are LDL and other lipoprotein receptors binding; it reads HLRKLRKRLLR. Position 161–164 (161–164) interacts with heparin; sequence LRKR. The interval 209 to 289 is lipid-binding and lipoprotein association; sequence AATLSTLAGQ…SWFEPLVEDM (81 aa). Threonine 211 carries O-linked (GalNAc...) threonine glycosylation. 228-235 lines the heparin pocket; the sequence is RQKLHGRL. Residues 265-316 form a homooligomerization region; that stretch reads NQMRLQAEAFQARLRSWFEPLVEDMQRQWAGLVEKVQLALRPSPTSPPSENH. Residues 277-289 are specificity for association with VLDL; the sequence is RLRSWFEPLVEDM.

It belongs to the apolipoprotein A1/A4/E family. As to quaternary structure, homotetramer. May interact with ABCA1; functionally associated with ABCA1 in the biogenesis of HDLs. May interact with APP/A4 amyloid-beta peptide; the interaction is extremely stable in vitro but its physiological significance is unclear. May interact with MAPT. May interact with MAP2. In the cerebrospinal fluid, interacts with secreted SORL1. Interacts with PMEL; this allows the loading of PMEL luminal fragment on ILVs to induce fibril nucleation. Post-translationally, APOE exists as multiple glycosylated and sialylated glycoforms within cells and in plasma. The extent of glycosylation and sialylation are tissue and context specific. Glycated in plasma VLDL. In terms of processing, phosphorylated by FAM20C in the extracellular medium.

It localises to the secreted. It is found in the extracellular space. The protein localises to the extracellular matrix. The protein resides in the extracellular vesicle. Its subcellular location is the endosome. It localises to the multivesicular body. Functionally, APOE is an apolipoprotein, a protein associating with lipid particles, that mainly functions in lipoprotein-mediated lipid transport between organs via the plasma and interstitial fluids. APOE is a core component of plasma lipoproteins and is involved in their production, conversion and clearance. Apolipoproteins are amphipathic molecules that interact both with lipids of the lipoprotein particle core and the aqueous environment of the plasma. As such, APOE associates with chylomicrons, chylomicron remnants, very low density lipoproteins (VLDL) and intermediate density lipoproteins (IDL) but shows a preferential binding to high-density lipoproteins (HDL). It also binds a wide range of cellular receptors including the LDL receptor/LDLR and the very low-density lipoprotein receptor/VLDLR that mediate the cellular uptake of the APOE-containing lipoprotein particles. Finally, APOE also has a heparin-binding activity and binds heparan-sulfate proteoglycans on the surface of cells, a property that supports the capture and the receptor-mediated uptake of APOE-containing lipoproteins by cells. In Bos mutus grunniens (Wild yak), this protein is Apolipoprotein E (APOE).